Here is a 184-residue protein sequence, read N- to C-terminus: Fe/S biogenesis protein NfuA (184 aa).

Positions 142 and 145 each coordinate [4Fe-4S] cluster.

This sequence belongs to the NfuA family. As to quaternary structure, homodimer. [4Fe-4S] cluster is required as a cofactor.

Its function is as follows. Involved in iron-sulfur cluster biogenesis. Binds a 4Fe-4S cluster, can transfer this cluster to apoproteins, and thereby intervenes in the maturation of Fe/S proteins. Could also act as a scaffold/chaperone for damaged Fe/S proteins. The polypeptide is Fe/S biogenesis protein NfuA (Wigglesworthia glossinidia brevipalpis).